A 181-amino-acid chain; its full sequence is ATP synthase subunit delta (181 aa).

The protein belongs to the ATPase delta chain family. In terms of assembly, F-type ATPases have 2 components, F(1) - the catalytic core - and F(0) - the membrane proton channel. F(1) has five subunits: alpha(3), beta(3), gamma(1), delta(1), epsilon(1). F(0) has three main subunits: a(1), b(2) and c(10-14). The alpha and beta chains form an alternating ring which encloses part of the gamma chain. F(1) is attached to F(0) by a central stalk formed by the gamma and epsilon chains, while a peripheral stalk is formed by the delta and b chains.

Its subcellular location is the cell inner membrane. F(1)F(0) ATP synthase produces ATP from ADP in the presence of a proton or sodium gradient. F-type ATPases consist of two structural domains, F(1) containing the extramembraneous catalytic core and F(0) containing the membrane proton channel, linked together by a central stalk and a peripheral stalk. During catalysis, ATP synthesis in the catalytic domain of F(1) is coupled via a rotary mechanism of the central stalk subunits to proton translocation. In terms of biological role, this protein is part of the stalk that links CF(0) to CF(1). It either transmits conformational changes from CF(0) to CF(1) or is implicated in proton conduction. The protein is ATP synthase subunit delta of Chlorobaculum parvum (strain DSM 263 / NCIMB 8327) (Chlorobium vibrioforme subsp. thiosulfatophilum).